The chain runs to 90 residues: Small ribosomal subunit protein bS20 (90 aa).

A compositionally biased stretch (basic and acidic residues) spans 1 to 11; it reads MANIKSSEKDI. Positions 1 to 29 are disordered; it reads MANIKSSEKDIRRTKRRNAANSQNRSRLR.

Belongs to the bacterial ribosomal protein bS20 family.

Its function is as follows. Binds directly to 16S ribosomal RNA. In Leptospira borgpetersenii serovar Hardjo-bovis (strain JB197), this protein is Small ribosomal subunit protein bS20.